The chain runs to 658 residues: Transport protein particle subunit trs85-1 (658 aa).

It belongs to the TRS85 family. In terms of assembly, part of the multisubunit TRAPP (transport protein particle) complexes I and II.

It is found in the golgi apparatus. It localises to the cis-Golgi network. Its function is as follows. Component of the TRAPP I and TRAPP II complexes. TRAPP I plays a key role in the late stages of endoplasmic reticulum to Golgi traffic. TRAPP II seems to play a role in intra-Golgi transport. Has a role late in meiosis following DNA replication. This chain is Transport protein particle subunit trs85-1 (trs85-1), found in Schizosaccharomyces pombe (strain 972 / ATCC 24843) (Fission yeast).